The following is a 130-amino-acid chain: Protein ApaG (130 aa).

An ApaG domain is found at 3–127; sequence RALTRDIEVT…FSLDTPDLRR (125 aa).

In Allorhizobium ampelinum (strain ATCC BAA-846 / DSM 112012 / S4) (Agrobacterium vitis (strain S4)), this protein is Protein ApaG.